The chain runs to 215 residues: Probable phosphoglycerate mutase GpmB (215 aa).

Substrate is bound by residues 8-15 (RHGETQWN), 21-22 (QG), Arg58, Arg60, 82-85 (ELNM), 104-105 (RR), and 151-152 (GI). The active-site Tele-phosphohistidine intermediate is His9. The active-site Proton donor/acceptor is Glu82.

Belongs to the phosphoglycerate mutase family. GpmB subfamily.

It carries out the reaction (2R)-2-phosphoglycerate = (2R)-3-phosphoglycerate. The protein operates within carbohydrate degradation; glycolysis; pyruvate from D-glyceraldehyde 3-phosphate: step 3/5. The protein is Probable phosphoglycerate mutase GpmB of Escherichia coli O9:H4 (strain HS).